Reading from the N-terminus, the 529-residue chain is Listeriolysin O (529 aa).

The signal sequence occupies residues 1–24 (MKKIMLVFITLILVSLPIAQQTEA). The next 4 membrane-spanning stretches (beta stranded) occupy residues 214-227 (ESQLIAKFGTAFKA), 234-243 (VNFGAISEGK), 312-321 (STKVKAAFDA), and 329-341 (SGDVELTNIIKNS). A Conserved undecapeptide motif is present at residues 483 to 493 (ECTGLAWEWWR). The Cholesterol binding signature appears at 515–516 (TL).

This sequence belongs to the cholesterol-dependent cytolysin family. As to quaternary structure, homooligomeric pore complex of 35 to 50 subunits; when inserted in the host membrane.

It is found in the secreted. Its subcellular location is the host membrane. The protein resides in the host cell membrane. With respect to regulation, activity of listeriolysin O is regulated on multiple levels. It should be high in the phagosome, thereby allowing escape of the bacteria from the phagosomal compartment. Then, once inside the host cytosol, the activity must be controlled to prevent lysis of the host plasma membrane and loss of the intracellular environment. Functionally, a cholesterol-dependent toxin that causes cytolysis by forming pores in cholesterol containing host membranes. After binding to target membranes, the protein undergoes a major conformation change, leading to its insertion in the host membrane and formation of an oligomeric pore complex. Cholesterol is required for binding to host membranes, membrane insertion and pore formation; cholesterol binding is mediated by a Thr-Leu pair in the C-terminus. Acts as a major virulence factor required for the escape of bacteria from phagosomal vacuoles and entry into the host cytosol. Can be reversibly inactivated by oxidation. The chain is Listeriolysin O (hly) from Listeria monocytogenes serotype 4b (strain CLIP80459).